A 487-amino-acid polypeptide reads, in one-letter code: Glycogen synthase (487 aa).

Residue lysine 19 coordinates ADP-alpha-D-glucose.

Belongs to the glycosyltransferase 1 family. Bacterial/plant glycogen synthase subfamily.

The enzyme catalyses [(1-&gt;4)-alpha-D-glucosyl](n) + ADP-alpha-D-glucose = [(1-&gt;4)-alpha-D-glucosyl](n+1) + ADP + H(+). It participates in glycan biosynthesis; glycogen biosynthesis. In terms of biological role, synthesizes alpha-1,4-glucan chains using ADP-glucose. The protein is Glycogen synthase of Moorella thermoacetica (strain ATCC 39073 / JCM 9320).